Consider the following 813-residue polypeptide: Acyl-homoserine lactone acylase QuiP (813 aa).

The signal sequence occupies residues Met-1 to Ala-26. The Nucleophile role is filled by Ser-262.

It belongs to the peptidase S45 family. As to quaternary structure, heterodimer of an alpha subunit and a beta subunit processed from the same precursor.

The protein resides in the periplasm. It carries out the reaction an N-acyl-L-homoserine lactone + H2O = L-homoserine lactone + a carboxylate. Catalyzes the deacylation of acyl-homoserine lactone (AHL or acyl-HSL), releasing homoserine lactone (HSL) and the corresponding fatty acid. Possesses a specificity for the degradation of long-chain acyl-HSLs (side chains of seven or more carbons in length). The polypeptide is Acyl-homoserine lactone acylase QuiP (quiP) (Pseudomonas putida (strain ATCC 47054 / DSM 6125 / CFBP 8728 / NCIMB 11950 / KT2440)).